A 485-amino-acid chain; its full sequence is Glutamyl-tRNA(Gln) amidotransferase subunit A (485 aa).

Residues lysine 78 and serine 153 each act as charge relay system in the active site. The Acyl-ester intermediate role is filled by serine 177.

Belongs to the amidase family. GatA subfamily. Heterotrimer of A, B and C subunits.

It catalyses the reaction L-glutamyl-tRNA(Gln) + L-glutamine + ATP + H2O = L-glutaminyl-tRNA(Gln) + L-glutamate + ADP + phosphate + H(+). Its function is as follows. Allows the formation of correctly charged Gln-tRNA(Gln) through the transamidation of misacylated Glu-tRNA(Gln) in organisms which lack glutaminyl-tRNA synthetase. The reaction takes place in the presence of glutamine and ATP through an activated gamma-phospho-Glu-tRNA(Gln). The protein is Glutamyl-tRNA(Gln) amidotransferase subunit A of Desulfotalea psychrophila (strain LSv54 / DSM 12343).